A 388-amino-acid chain; its full sequence is Chorismate synthase (388 aa).

Positions 39 and 45 each coordinate NADP(+). A disordered region spans residues 95–118 (EKNEKSRRVSRPRPGHADLVGGMK). Residues 130–132 (RSS), 251–252 (NA), glycine 296, 311–315 (KPIPT), and arginine 337 contribute to the FMN site.

The protein belongs to the chorismate synthase family. As to quaternary structure, homotetramer. The cofactor is FMNH2.

It catalyses the reaction 5-O-(1-carboxyvinyl)-3-phosphoshikimate = chorismate + phosphate. The protein operates within metabolic intermediate biosynthesis; chorismate biosynthesis; chorismate from D-erythrose 4-phosphate and phosphoenolpyruvate: step 7/7. In terms of biological role, catalyzes the anti-1,4-elimination of the C-3 phosphate and the C-6 proR hydrogen from 5-enolpyruvylshikimate-3-phosphate (EPSP) to yield chorismate, which is the branch point compound that serves as the starting substrate for the three terminal pathways of aromatic amino acid biosynthesis. This reaction introduces a second double bond into the aromatic ring system. This chain is Chorismate synthase, found in Listeria monocytogenes serotype 4b (strain F2365).